The primary structure comprises 190 residues: Imidazoleglycerol-phosphate dehydratase (190 aa).

This sequence belongs to the imidazoleglycerol-phosphate dehydratase family.

Its subcellular location is the cytoplasm. The enzyme catalyses D-erythro-1-(imidazol-4-yl)glycerol 3-phosphate = 3-(imidazol-4-yl)-2-oxopropyl phosphate + H2O. Its pathway is amino-acid biosynthesis; L-histidine biosynthesis; L-histidine from 5-phospho-alpha-D-ribose 1-diphosphate: step 6/9. This chain is Imidazoleglycerol-phosphate dehydratase, found in Wolinella succinogenes (strain ATCC 29543 / DSM 1740 / CCUG 13145 / JCM 31913 / LMG 7466 / NCTC 11488 / FDC 602W) (Vibrio succinogenes).